The following is a 404-amino-acid chain: Probable tRNA sulfurtransferase (404 aa).

The THUMP domain occupies 60–165 (RSVIEALKPV…DEAAYLSHED (106 aa)). Residues 183-184 (ML), 208-209 (HF), arginine 265, glycine 287, and glutamine 296 each bind ATP.

Belongs to the ThiI family.

Its subcellular location is the cytoplasm. The catalysed reaction is [ThiI sulfur-carrier protein]-S-sulfanyl-L-cysteine + a uridine in tRNA + 2 reduced [2Fe-2S]-[ferredoxin] + ATP + H(+) = [ThiI sulfur-carrier protein]-L-cysteine + a 4-thiouridine in tRNA + 2 oxidized [2Fe-2S]-[ferredoxin] + AMP + diphosphate. The enzyme catalyses [ThiS sulfur-carrier protein]-C-terminal Gly-Gly-AMP + S-sulfanyl-L-cysteinyl-[cysteine desulfurase] + AH2 = [ThiS sulfur-carrier protein]-C-terminal-Gly-aminoethanethioate + L-cysteinyl-[cysteine desulfurase] + A + AMP + 2 H(+). Its pathway is cofactor biosynthesis; thiamine diphosphate biosynthesis. In terms of biological role, catalyzes the ATP-dependent transfer of a sulfur to tRNA to produce 4-thiouridine in position 8 of tRNAs, which functions as a near-UV photosensor. Also catalyzes the transfer of sulfur to the sulfur carrier protein ThiS, forming ThiS-thiocarboxylate. This is a step in the synthesis of thiazole, in the thiamine biosynthesis pathway. The sulfur is donated as persulfide by IscS. The chain is Probable tRNA sulfurtransferase from Streptococcus equi subsp. equi (strain 4047).